A 392-amino-acid chain; its full sequence is Integrin-linked kinase-associated serine/threonine phosphatase 2C (392 aa).

M1 is modified (N-acetylmethionine). A disordered region spans residues 1–91 (MDLFGDLPEP…PEEEKNGGEE (91 aa)). Positions 31–40 (DLPPTSSTDS) are enriched in low complexity. The span at 59 to 70 (SGSLATSGSQVV) shows a compositional bias: polar residues. Positions 72–91 (NEGKGAKRKAPEEEKNGGEE) are enriched in basic and acidic residues. The region spanning 108–390 (KGYVAERKGE…DNVTVMVVRI (283 aa)) is the PPM-type phosphatase domain. Mn(2+) is bound by residues D152 and G153. K210 bears the N6-acetyllysine mark. Mn(2+)-binding residues include D326 and D381.

This sequence belongs to the PP2C family. Interacts with ILK. The cofactor is Mg(2+). Requires Mn(2+) as cofactor. In terms of tissue distribution, widely expressed. Highest expression observed in kidney, liver and muscle.

It is found in the cytoplasm. It catalyses the reaction O-phospho-L-seryl-[protein] + H2O = L-seryl-[protein] + phosphate. The enzyme catalyses O-phospho-L-threonyl-[protein] + H2O = L-threonyl-[protein] + phosphate. Its function is as follows. Protein phosphatase that may play a role in regulation of cell cycle progression via dephosphorylation of its substrates whose appropriate phosphorylation states might be crucial for cell proliferation. Selectively associates with integrin linked kinase (ILK), to modulate cell adhesion and growth factor signaling. Inhibits the ILK-GSK3B signaling axis and may play an important role in inhibiting oncogenic transformation. The sequence is that of Integrin-linked kinase-associated serine/threonine phosphatase 2C (Ilkap) from Rattus norvegicus (Rat).